The primary structure comprises 250 residues: Large ribosomal subunit protein uL4 (250 aa).

Disordered regions lie at residues 1-20 (MQVT…DLPR) and 51-101 (YAGL…HGLD). Over residues 92-101 (PKAEKDHGLD) the composition is skewed to basic and acidic residues.

It belongs to the universal ribosomal protein uL4 family. Part of the 50S ribosomal subunit.

Its function is as follows. One of the primary rRNA binding proteins, this protein initially binds near the 5'-end of the 23S rRNA. It is important during the early stages of 50S assembly. It makes multiple contacts with different domains of the 23S rRNA in the assembled 50S subunit and ribosome. In terms of biological role, forms part of the polypeptide exit tunnel. The protein is Large ribosomal subunit protein uL4 of Halobacterium salinarum (strain ATCC 29341 / DSM 671 / R1).